We begin with the raw amino-acid sequence, 442 residues long: Ankyrin repeat and MYND domain-containing protein 2 (442 aa).

ANK repeat units follow at residues 45-74, 79-108, and 159-188; these read NGMT…DVNC, HGYT…ETDV, and KLAG…NPLL. 8 residues coordinate Zn(2+): cysteine 320, cysteine 323, cysteine 332, cysteine 335, cysteine 341, cysteine 345, histidine 353, and cysteine 357. The MYND-type zinc finger occupies 320 to 357; that stretch reads CTTCGEKGASKRCSVCKMVIYCDQTCQKTHWFAHKKIC. Over residues 401–421 the composition is skewed to basic and acidic residues; that stretch reads TRICQKNDNPKDSEEGEKESL. Residues 401 to 442 are disordered; it reads TRICQKNDNPKDSEEGEKESLQSDAGLEGLQEAAVGPQVSEE.

As to quaternary structure, interacts with the retinal-specific guanylyl cyclase GC1.

The protein localises to the cell projection. It localises to the cilium. Its function is as follows. May be involved in the trafficking of signaling proteins to the cilia. The chain is Ankyrin repeat and MYND domain-containing protein 2 (ANKMY2) from Bos taurus (Bovine).